A 123-amino-acid chain; its full sequence is Large ribosomal subunit protein bL12 (123 aa).

Belongs to the bacterial ribosomal protein bL12 family. Homodimer. Part of the ribosomal stalk of the 50S ribosomal subunit. Forms a multimeric L10(L12)X complex, where L10 forms an elongated spine to which 2 to 4 L12 dimers bind in a sequential fashion. Binds GTP-bound translation factors.

Its function is as follows. Forms part of the ribosomal stalk which helps the ribosome interact with GTP-bound translation factors. Is thus essential for accurate translation. The chain is Large ribosomal subunit protein bL12 from Bartonella quintana (strain Toulouse) (Rochalimaea quintana).